We begin with the raw amino-acid sequence, 490 residues long: Betaine aldehyde dehydrogenase (490 aa).

Thr26, Ile27, and Asp93 together coordinate K(+). 150 to 152 is a binding site for NAD(+); sequence GAW. Lys162 serves as the catalytic Charge relay system. Residue 176–179 participates in NAD(+) binding; that stretch reads KPSE. Val180 is a binding site for K(+). Residue 230 to 233 participates in NAD(+) binding; that stretch reads GVAS. Position 246 (Leu246) interacts with K(+). Glu252 acts as the Proton acceptor in catalysis. 3 residues coordinate NAD(+): Gly254, Cys286, and Glu387. The Nucleophile role is filled by Cys286. Cysteine sulfenic acid (-SOH) is present on Cys286. K(+)-binding residues include Lys457 and Gly460. Catalysis depends on Glu464, which acts as the Charge relay system.

The protein belongs to the aldehyde dehydrogenase family. As to quaternary structure, dimer of dimers. It depends on K(+) as a cofactor.

The enzyme catalyses betaine aldehyde + NAD(+) + H2O = glycine betaine + NADH + 2 H(+). Its pathway is amine and polyamine biosynthesis; betaine biosynthesis via choline pathway; betaine from betaine aldehyde: step 1/1. Functionally, involved in the biosynthesis of the osmoprotectant glycine betaine. Catalyzes the irreversible oxidation of betaine aldehyde to the corresponding acid. The chain is Betaine aldehyde dehydrogenase from Escherichia coli (strain SMS-3-5 / SECEC).